The sequence spans 145 residues: Large ribosomal subunit protein uL15 (145 aa).

Basic residues-rich tracts occupy residues 1–13 (MVRE…RGGH) and 19–29 (KAGRGKGKKGG). A disordered region spans residues 1 to 33 (MVRERTKKLRGGHYGRGMKAGRGKGKKGGRGNA).

It belongs to the universal ribosomal protein uL15 family. Part of the 50S ribosomal subunit.

In terms of biological role, binds to the 23S rRNA. The sequence is that of Large ribosomal subunit protein uL15 from Thermoplasma volcanium (strain ATCC 51530 / DSM 4299 / JCM 9571 / NBRC 15438 / GSS1).